The sequence spans 425 residues: MMSVLKKICGSKNSLKSFDNEVYQSIEKELQRQKSQLQLIASENFASKAVMEAQGSFLTNKYAEGYPGKRYYCGCEHVDKIESLAIERLCKLFGVKFANVQPHSGSQANQAVFASLLTPGDTILGLSLSCGGHLTHGAAPSLSGKWFKSIQYTVNKDTYLLNMDEIEKLALEHKPKLIIAGASAYPRKMDFKRFREIADKVGAYLLADIAHYAGLIAAGEYPSPAEYAHVMTSTTHKTLRGPRGGIVMTNDEALHKKIQSAVFPGLQGGPLMHVIAAKAVAFKEALAPEFKTYSKKVVENAKVLAQELQKHGLDIITGGTDSHIVLVDLRSQKLTGKDVVDSLERAGITCNKNSVPFDTAKPTITSGLRFGTAAETTRGLEAENFKEIAGLINEVIQGLISGNSSSVEKAVKAKVERICSNFPIY.

Residues leucine 128 and 132–134 contribute to the (6S)-5,6,7,8-tetrahydrofolate site; that span reads GHL. An N6-(pyridoxal phosphate)lysine modification is found at lysine 237.

This sequence belongs to the SHMT family. Homodimer. Pyridoxal 5'-phosphate serves as cofactor.

It is found in the cytoplasm. It carries out the reaction (6R)-5,10-methylene-5,6,7,8-tetrahydrofolate + glycine + H2O = (6S)-5,6,7,8-tetrahydrofolate + L-serine. Its pathway is one-carbon metabolism; tetrahydrofolate interconversion. The protein operates within amino-acid biosynthesis; glycine biosynthesis; glycine from L-serine: step 1/1. Functionally, catalyzes the reversible interconversion of serine and glycine with tetrahydrofolate (THF) serving as the one-carbon carrier. This reaction serves as the major source of one-carbon groups required for the biosynthesis of purines, thymidylate, methionine, and other important biomolecules. Also exhibits THF-independent aldolase activity toward beta-hydroxyamino acids, producing glycine and aldehydes, via a retro-aldol mechanism. In Wolbachia pipientis wMel, this protein is Serine hydroxymethyltransferase.